The sequence spans 125 residues: Glycine cleavage system H protein (125 aa).

The Lipoyl-binding domain maps to 23–105 (VSTVGITEHA…FEGGWLFKVR (83 aa)). Lys64 is subject to N6-lipoyllysine.

It belongs to the GcvH family. In terms of assembly, the glycine cleavage system is composed of four proteins: P, T, L and H. Requires (R)-lipoate as cofactor.

Its function is as follows. The glycine cleavage system catalyzes the degradation of glycine. The H protein shuttles the methylamine group of glycine from the P protein to the T protein. The sequence is that of Glycine cleavage system H protein from Streptomyces coelicolor (strain ATCC BAA-471 / A3(2) / M145).